The chain runs to 560 residues: Nucleoprotein (560 aa).

Positions 54–236 (LRKSKRGDTD…ITKDESALNI (183 aa)) are binding site for the cap structure m7GTP. Mn(2+) is bound by residues D380 and E382. The Zn(2+) site is built by E390, C497, H500, and C521. D525 lines the Mn(2+) pocket.

Belongs to the arenaviridae nucleocapsid protein family. As to quaternary structure, homomultimerizes to form the nucleocapsid. Binds to viral genomic RNA. Interacts with glycoprotein G2. Interacts with protein Z; this interaction probably directs the encapsidated genome to budding sites. Interacts with protein L; this interaction does not interfere with Z-L interaction. Interacts with host IKBKE (via Protein kinase domain); the interaction inhibits IKBKE kinase activity.

It localises to the virion. The protein resides in the host cytoplasm. In terms of biological role, encapsidates the genome, protecting it from nucleases. The encapsidated genomic RNA is termed the nucleocapsid (NC). Serves as template for viral transcription and replication. The increased presence of protein N in host cell does not seem to trigger the switch from transcription to replication as observed in other negative strain RNA viruses. Through the interaction with host IKBKE, strongly inhibits the phosphorylation and nuclear translocation of host IRF3, a protein involved in interferon activation pathway, leading to the inhibition of interferon-beta and IRF3-dependent promoters activation. Also encodes a functional 3'-5' exoribonuclease that degrades preferentially dsRNA substrates and thereby participates in the suppression of interferon induction. In Homo sapiens (Human), this protein is Nucleoprotein.